The primary structure comprises 200 residues: GTP cyclohydrolase-2 (200 aa).

50–54 (RIHSE) lines the GTP pocket. Residues C55, C66, and C68 each coordinate Zn(2+). GTP-binding positions include Q71, 93–95 (EGR), and T115. The Proton acceptor role is filled by D127. The active-site Nucleophile is R129. T150 and K155 together coordinate GTP.

It belongs to the GTP cyclohydrolase II family. The cofactor is Zn(2+).

It carries out the reaction GTP + 4 H2O = 2,5-diamino-6-hydroxy-4-(5-phosphoribosylamino)-pyrimidine + formate + 2 phosphate + 3 H(+). The protein operates within cofactor biosynthesis; riboflavin biosynthesis; 5-amino-6-(D-ribitylamino)uracil from GTP: step 1/4. Functionally, catalyzes the conversion of GTP to 2,5-diamino-6-ribosylamino-4(3H)-pyrimidinone 5'-phosphate (DARP), formate and pyrophosphate. This chain is GTP cyclohydrolase-2, found in Acinetobacter baylyi (strain ATCC 33305 / BD413 / ADP1).